Consider the following 600-residue polypeptide: NADH-quinone oxidoreductase subunit C/D (600 aa).

An NADH dehydrogenase I subunit C region spans residues 1–190 (MVNNMTDLTA…DPFELTKAKQ (190 aa)). Residues 214 to 600 (DFMFLNLGPN…IDFVMSDVDR (387 aa)) are NADH dehydrogenase I subunit D.

The protein in the N-terminal section; belongs to the complex I 30 kDa subunit family. In the C-terminal section; belongs to the complex I 49 kDa subunit family. In terms of assembly, NDH-1 is composed of 13 different subunits. Subunits NuoB, CD, E, F, and G constitute the peripheral sector of the complex.

Its subcellular location is the cell inner membrane. It catalyses the reaction a quinone + NADH + 5 H(+)(in) = a quinol + NAD(+) + 4 H(+)(out). Its function is as follows. NDH-1 shuttles electrons from NADH, via FMN and iron-sulfur (Fe-S) centers, to quinones in the respiratory chain. The immediate electron acceptor for the enzyme in this species is believed to be ubiquinone. Couples the redox reaction to proton translocation (for every two electrons transferred, four hydrogen ions are translocated across the cytoplasmic membrane), and thus conserves the redox energy in a proton gradient. The polypeptide is NADH-quinone oxidoreductase subunit C/D (Salmonella arizonae (strain ATCC BAA-731 / CDC346-86 / RSK2980)).